Here is an 852-residue protein sequence, read N- to C-terminus: Leucine--tRNA ligase (852 aa).

The 'HIGH' region signature appears at 41 to 51 (PYPSGRIHIGH). The 'KMSKS' region motif lies at 623–627 (KMSKS). An ATP-binding site is contributed by lysine 626.

Belongs to the class-I aminoacyl-tRNA synthetase family.

The protein localises to the cytoplasm. It carries out the reaction tRNA(Leu) + L-leucine + ATP = L-leucyl-tRNA(Leu) + AMP + diphosphate. This Ruegeria pomeroyi (strain ATCC 700808 / DSM 15171 / DSS-3) (Silicibacter pomeroyi) protein is Leucine--tRNA ligase.